A 557-amino-acid chain; its full sequence is T-complex protein 1 subunit eta (557 aa).

At Ala-2 the chain carries N-acetylalanine. Residues Pro-529–Arg-557 form a disordered region. The segment covering Gly-547 to Arg-557 has biased composition (basic residues).

This sequence belongs to the TCP-1 chaperonin family. Heterooligomeric complex of about 850 to 900 kDa that forms two stacked rings, 12 to 16 nm in diameter. Interacts with KNAT1.

The protein localises to the cytoplasm. In terms of biological role, molecular chaperone; assists the folding of proteins upon ATP hydrolysis. Known to play a role, in vitro, in the folding of actin and tubulin. The sequence is that of T-complex protein 1 subunit eta from Arabidopsis thaliana (Mouse-ear cress).